The following is a 166-amino-acid chain: Transcription antitermination protein NusB (166 aa).

The segment covering 1-15 (MISDDSDRFNPRDPK) has biased composition (basic and acidic residues). Residues 1–30 (MISDDSDRFNPRDPKPANAGKPSKSAKRRE) form a disordered region.

The protein belongs to the NusB family.

Its function is as follows. Involved in transcription antitermination. Required for transcription of ribosomal RNA (rRNA) genes. Binds specifically to the boxA antiterminator sequence of the ribosomal RNA (rrn) operons. In Pseudomonas fluorescens (strain ATCC BAA-477 / NRRL B-23932 / Pf-5), this protein is Transcription antitermination protein NusB.